The chain runs to 517 residues: Ribonuclease Y (517 aa).

The chain crosses the membrane as a helical span at residues 1 to 21 (MIESLIALIAAIVGLGIGYLV). The 67-residue stretch at 207–273 (LINVINIKND…TKVIELLVED (67 aa)) folds into the KH domain. An HD domain is found at 333-426 (ALAHSLEVAH…VCAADTLSAA (94 aa)).

Belongs to the RNase Y family.

It is found in the cell membrane. In terms of biological role, endoribonuclease that initiates mRNA decay. The sequence is that of Ribonuclease Y from Campylobacter jejuni subsp. jejuni serotype O:6 (strain 81116 / NCTC 11828).